Reading from the N-terminus, the 348-residue chain is UDP-rhamnose/UDP-galactose transporter 2 (348 aa).

10 helical membrane-spanning segments follow: residues 12–32 (AVSDVGAWAMNVTSSVGIIMA), 44–64 (FSFATTLTGFHFALTALVGMV), 81–101 (LLWFSLVANISIAAMNFSLML), 104–124 (VGFYQISKLSMIPVVCVMEWV), 133–153 (EVKASVMVVVVGVGICTVTDV), 160–180 (FICACTAVFSTSLQQISIGSL), 196–216 (APIQAISLLIFGPFVDYFLSG), 230–250 (LCILLSCALAVFCNISQYLCI), 257–277 (SFQVLGHMKTVCVLTLGWLIF), and 286–306 (IAGMVLAVVGMVIYSWAVELE).

This sequence belongs to the TPT transporter family. TPT (TC 2.A.7.9) subfamily.

The protein localises to the golgi apparatus membrane. Its function is as follows. Nucleotide-sugar transporter that transports UDP-rhamnose or UDP-galactose and UMP in a strict counter-exchange mode. The sequence is that of UDP-rhamnose/UDP-galactose transporter 2 from Arabidopsis thaliana (Mouse-ear cress).